Consider the following 186-residue polypeptide: Ribosome-recycling factor (186 aa).

This sequence belongs to the RRF family.

It localises to the cytoplasm. Functionally, responsible for the release of ribosomes from messenger RNA at the termination of protein biosynthesis. May increase the efficiency of translation by recycling ribosomes from one round of translation to another. The polypeptide is Ribosome-recycling factor (Chlorobium chlorochromatii (strain CaD3)).